Consider the following 493-residue polypeptide: Lysine--tRNA ligase (493 aa).

The Mg(2+) site is built by Glu-400 and Glu-407.

The protein belongs to the class-II aminoacyl-tRNA synthetase family. In terms of assembly, homodimer. Mg(2+) is required as a cofactor.

It localises to the cytoplasm. The catalysed reaction is tRNA(Lys) + L-lysine + ATP = L-lysyl-tRNA(Lys) + AMP + diphosphate. The sequence is that of Lysine--tRNA ligase from Syntrophomonas wolfei subsp. wolfei (strain DSM 2245B / Goettingen).